A 125-amino-acid polypeptide reads, in one-letter code: DNA-directed RNA polymerase subunit omega (125 aa).

It belongs to the RNA polymerase subunit omega family. In terms of assembly, the RNAP catalytic core consists of 2 alpha, 1 beta, 1 beta' and 1 omega subunit. When a sigma factor is associated with the core the holoenzyme is formed, which can initiate transcription.

It catalyses the reaction RNA(n) + a ribonucleoside 5'-triphosphate = RNA(n+1) + diphosphate. Its function is as follows. Promotes RNA polymerase assembly. Latches the N- and C-terminal regions of the beta' subunit thereby facilitating its interaction with the beta and alpha subunits. The protein is DNA-directed RNA polymerase subunit omega of Zymomonas mobilis subsp. mobilis (strain ATCC 31821 / ZM4 / CP4).